Consider the following 125-residue polypeptide: Large-conductance mechanosensitive channel (125 aa).

The next 2 helical transmembrane spans lie at 15–35 (MDLAVGVIIGAAFTAIVNSLV) and 67–87 (GSFLNAVINFLIIALVVFFLI).

Belongs to the MscL family. In terms of assembly, homopentamer.

It is found in the cell membrane. Its function is as follows. Channel that opens in response to stretch forces in the membrane lipid bilayer. May participate in the regulation of osmotic pressure changes within the cell. The polypeptide is Large-conductance mechanosensitive channel (Lactobacillus gasseri (strain ATCC 33323 / DSM 20243 / BCRC 14619 / CIP 102991 / JCM 1131 / KCTC 3163 / NCIMB 11718 / NCTC 13722 / AM63)).